We begin with the raw amino-acid sequence, 189 residues long: Penicillin-binding protein activator LpoB (189 aa).

Residues 1 to 16 form the signal peptide; it reads MRRILFVALSVMFLAG. Cys-17 is lipidated: N-palmitoyl cysteine. Residue Cys-17 is the site of S-diacylglycerol cysteine attachment. The segment at 18–52 is disordered; that stretch reads PSLPPEQPEPPTPVVPVTPSEKPTPPSEKVPEPPK. The segment covering 19–45 has biased composition (pro residues); the sequence is SLPPEQPEPPTPVVPVTPSEKPTPPSE.

The protein belongs to the LpoB family. Interacts with PBP1b.

It is found in the cell outer membrane. In terms of biological role, regulator of peptidoglycan synthesis that is essential for the function of penicillin-binding protein 1B (PBP1b). The polypeptide is Penicillin-binding protein activator LpoB (Photorhabdus laumondii subsp. laumondii (strain DSM 15139 / CIP 105565 / TT01) (Photorhabdus luminescens subsp. laumondii)).